Consider the following 367-residue polypeptide: Endophilin-A2 (367 aa).

Residues 1 to 21 are membrane-binding amphipathic helix; the sequence is MSVAGLKKQFYKASQLVSEKV. The BAR domain occupies 18–249; sequence SEKVGGAEGT…LKRRMREASS (232 aa). The segment at 60 to 87 is required for dimerization upon membrane association; that stretch reads PNPASRAKLTMLNTMSKIRGQVKNPGYP. Positions 181–250 form a coiled coil; sequence EELRQAMEKF…KRRMREASSR (70 aa). The segment at 218–254 is interaction with ARC; the sequence is LVDAQLDYHRQAVQILDELAEKLKRRMREASSRPRRE. Residues 243–293 are disordered; that stretch reads RMREASSRPRREYKPKPRETYDFGESDQSNGGFSCTPTPKVSASSSFRSDK. Positions 245–263 are enriched in basic and acidic residues; it reads REASSRPRREYKPKPRETY. A compositionally biased stretch (polar residues) spans 268–289; it reads SDQSNGGFSCTPTPKVSASSSF. Residues 305 to 364 form the SH3 domain; the sequence is LDQPCCKALYDFEPENDGELGFKEGDIITLTNQIDENWYEGMINGQSGFFPLNYVEVLVP.

Belongs to the endophilin family. As to quaternary structure, interacts with ARC. Interacts with SYNJ1 and DNM1. Highest level in central region of the theca of developing follicles (at protein level). Expressed at highest level in brain and testis, at high level in kidney, lung and stroma, low level in spleen and adrenal gland (at protein level). Expressed in most tissue with highest levels in small ovarian follicles, brain and testis.

The protein localises to the cytoplasm. The protein resides in the early endosome membrane. It localises to the cell projection. It is found in the podosome. Implicated in endocytosis. May recruit other proteins to membranes with high curvature. In Gallus gallus (Chicken), this protein is Endophilin-A2.